The sequence spans 52 residues: uncharacterized protein (52 aa).

A disordered region spans residues 1-52; the sequence is MVNNDAKIGRREFYDRVESVRPKSPPRERPTYTYSNSRTVDGYSNRGPRADF. A compositionally biased stretch (basic and acidic residues) spans 7-30; sequence KIGRREFYDRVESVRPKSPPRERP.

This is an uncharacterized protein from Dictyostelium discoideum (Social amoeba).